The sequence spans 46 residues: TGTGPSLSIVNPLDVLRQRLLLEIARRRMRQTQNMIQANRDFLESI.

I46 carries the isoleucine amide modification.

It is found in the secreted. Regulation of fluid secretion. Stimulates primary urine secretion by Malpighian tubules and causes a dose-dependent stimulation of cAMP levels in the tubules. Has a greater effect on the transport of Na(+) then K(+) ions. In vitro, has synergistic effects with the smaller diuretic hormone DH(31) which co-occurs with it. This Diploptera punctata (Pacific beetle cockroach) protein is Diuretic hormone class 1.